The following is a 162-amino-acid chain: NADH-quinone oxidoreductase subunit I (162 aa).

2 4Fe-4S ferredoxin-type domains span residues 53–83 (LRRY…IEAE) and 93–122 (TRYD…ETRI). [4Fe-4S] cluster is bound by residues cysteine 63, cysteine 66, cysteine 69, cysteine 73, cysteine 102, cysteine 105, cysteine 108, and cysteine 112.

It belongs to the complex I 23 kDa subunit family. In terms of assembly, NDH-1 is composed of 14 different subunits. Subunits NuoA, H, J, K, L, M, N constitute the membrane sector of the complex. [4Fe-4S] cluster is required as a cofactor.

It localises to the cell inner membrane. The enzyme catalyses a quinone + NADH + 5 H(+)(in) = a quinol + NAD(+) + 4 H(+)(out). In terms of biological role, NDH-1 shuttles electrons from NADH, via FMN and iron-sulfur (Fe-S) centers, to quinones in the respiratory chain. The immediate electron acceptor for the enzyme in this species is believed to be ubiquinone. Couples the redox reaction to proton translocation (for every two electrons transferred, four hydrogen ions are translocated across the cytoplasmic membrane), and thus conserves the redox energy in a proton gradient. This is NADH-quinone oxidoreductase subunit I from Dechloromonas aromatica (strain RCB).